The sequence spans 773 residues: MTEIENIGALEVLFSPESIEQSLKRCQLPSTLLYDEKGLRLFDEITNLKEYYLYESELDILKKFSDSIANQLLSPDLPNTVIELGCGNMRKTKLLLDAFEKKGCDVHFYALDLNEAELQKGLQELRQTTNYQHVKVSGICGCFERLLQCLDRFRSEPNSRISMLYLGASIGNFDRKSAASFLRSFASRLNIHDNLLISFDHRNKAELVQLAYDDPYRITEKFEKNILASVNAVFGENLFDENDWEYKSVYDEDLGVHRAYLQAKNEVTVIKGPMFFQFKPSHLILIEESWKNSDQECRQIIEKGDFKLVSKYESTIADYSTYVITKQFPAMLQLPLQPCPSLAEWDALRKVWLFITNKLLNKDNMYTAWIPLRHPPIFYIGHVPVFNDIYLTKIVKNKATANKKHFWEWFQRGIDPDIEDPSKCHWHSEVPESWPSPDQLREYEKESWEYHIVKLCKAMDELSTSEKRILWLCYEHVAMHVETTLYIYVQSFQNANQTVSICGSLPEPAEKLTKAPLWVNVPETEIAVGMPLTTQYTSVGSNLQSSDLSAHENTDELFYFAWDNEKPMRKKLVSSFSIANRPISNGEYLDFINKKSKTERVYPKQWAEIDGTLYIRTMYGLLPLDDYLGWPVMTSYDDLNNYASSQGCRLPTEDELNCFYDRVLERTDEPYVSTEGKATGFQQLHPLALSDNSSNQIFTGAWEWTSTVLEKHEDFEPEELYPDYTRDFFDGKHNVVLGGSFATATRISNRRSFRNFYQAGYKYAWIGARLVKN.

Residues 16-322 (PESIEQSLKR…ESTIADYSTY (307 aa)) form an L-histidine N(alpha)-methyltransferase region. An L-histidine-binding site is contributed by Y51. Residues G85, K91, D112, and 142-143 (CF) each bind S-adenosyl-L-methionine. Residues N172, Y212, and 287–289 (EES) each bind L-histidine. The segment at 347-772 (ALRKVWLFIT…YAWIGARLVK (426 aa)) is hercynylcysteine S-oxide synthase. Residues H382, H476, and H480 each coordinate Fe cation.

The protein in the N-terminal section; belongs to the methyltransferase superfamily. EgtD family. It in the C-terminal section; belongs to the EgtB family. Fe(2+) is required as a cofactor.

It is found in the cytoplasm. The protein resides in the nucleus. It carries out the reaction L-histidine + 3 S-adenosyl-L-methionine = hercynine + 3 S-adenosyl-L-homocysteine + 3 H(+). The catalysed reaction is hercynine + L-cysteine + O2 = S-(hercyn-2-yl)-L-cysteine S-oxide + H2O. It functions in the pathway amino-acid biosynthesis; ergothioneine biosynthesis. Its function is as follows. Catalyzes the SAM-dependent triple methylation of the alpha-amino group of histidine to form hercynine and subsequent conjugation with cysteine and oxygen to form hercynylcysteine sulfoxide, the first two steps in the biosynthesis pathway of ergothioneine. May play a role in meiosis. The chain is Ergothioneine biosynthesis protein 1 from Schizosaccharomyces pombe (strain 972 / ATCC 24843) (Fission yeast).